The primary structure comprises 393 residues: Elongation factor Tu (393 aa).

The tr-type G domain maps to 6–204; sequence KPHINVGTIG…ALEKIELPVR (199 aa). A G1 region spans residues 15–22; that stretch reads GHVDHGKT. GTP is bound at residue 15–22; it reads GHVDHGKT. T22 contacts Mg(2+). The G2 stretch occupies residues 58-62; the sequence is GITIS. Residues 79–82 are G3; that stretch reads DCPG. GTP-binding positions include 79–83 and 134–137; these read DCPGH and NKCD. Positions 134-137 are G4; that stretch reads NKCD. The segment at 172–174 is G5; the sequence is SAV.

Belongs to the TRAFAC class translation factor GTPase superfamily. Classic translation factor GTPase family. EF-Tu/EF-1A subfamily. In terms of assembly, monomer.

The protein resides in the cytoplasm. The catalysed reaction is GTP + H2O = GDP + phosphate + H(+). In terms of biological role, GTP hydrolase that promotes the GTP-dependent binding of aminoacyl-tRNA to the A-site of ribosomes during protein biosynthesis. This chain is Elongation factor Tu, found in Anaplasma marginale (strain St. Maries).